We begin with the raw amino-acid sequence, 330 residues long: Basic leucine zipper 2 (330 aa).

Residues 1–207 (MAQLPPKIPT…NRQSAQRSRV (207 aa)) form a disordered region. Basic residues predominate over residues 21–34 (GHHHHAAHGHHHQR). The span at 45-56 (PLPPFPLPPPAP) shows a compositional bias: pro residues. Low complexity-rich tracts occupy residues 57–72 (ANGGAQQQQQQQQHQP) and 139–151 (QPAAPAASASSPS). The segment covering 155-166 (SMNDEKQDKGET) has biased composition (basic and acidic residues). The bZIP domain occupies 188 to 244 (DPKRVKRILANRQSAQRSRVRKLQYISELERSVTSLQTEVSALSPRVAFLDHQRSLL). The interval 190-209 (KRVKRILANRQSAQRSRVRK) is basic motif. The tract at residues 216–244 (LERSVTSLQTEVSALSPRVAFLDHQRSLL) is leucine-zipper. Residues 267–330 (GGTEEGDREA…LVIGRDPDAL (64 aa)) form a disordered region.

In terms of tissue distribution, expressed in roots, shoots and panicles.

It is found in the nucleus. In terms of biological role, transcription regulator. The protein is Basic leucine zipper 2 (BZIP02) of Oryza sativa subsp. japonica (Rice).